We begin with the raw amino-acid sequence, 475 residues long: Glycogen synthase (475 aa).

Lysine 15 is a binding site for ADP-alpha-D-glucose.

It belongs to the glycosyltransferase 1 family. Bacterial/plant glycogen synthase subfamily.

The enzyme catalyses [(1-&gt;4)-alpha-D-glucosyl](n) + ADP-alpha-D-glucose = [(1-&gt;4)-alpha-D-glucosyl](n+1) + ADP + H(+). The protein operates within glycan biosynthesis; glycogen biosynthesis. Synthesizes alpha-1,4-glucan chains using ADP-glucose. The sequence is that of Glycogen synthase from Anaeromyxobacter sp. (strain Fw109-5).